The following is an 89-amino-acid chain: Small ribosomal subunit protein uS19 (89 aa).

It belongs to the universal ribosomal protein uS19 family.

In terms of biological role, protein S19 forms a complex with S13 that binds strongly to the 16S ribosomal RNA. The polypeptide is Small ribosomal subunit protein uS19 (Akkermansia muciniphila (strain ATCC BAA-835 / DSM 22959 / JCM 33894 / BCRC 81048 / CCUG 64013 / CIP 107961 / Muc)).